Reading from the N-terminus, the 445-residue chain is Adenylosuccinate synthetase (445 aa).

Residues 12-18 (GDEGKGK) and 40-42 (GHT) each bind GTP. Aspartate 13 (proton acceptor) is an active-site residue. Residues aspartate 13 and glycine 40 each coordinate Mg(2+). IMP is bound by residues 13 to 16 (DEGK), 38 to 41 (NAGH), threonine 128, arginine 142, glutamine 223, threonine 238, and arginine 302. The Proton donor role is filled by histidine 41. Position 298–304 (298–304 (TTTGRKR)) interacts with substrate. GTP is bound by residues arginine 304, 330-332 (KLD), and 411-413 (SLG).

Belongs to the adenylosuccinate synthetase family. In terms of assembly, homodimer. Mg(2+) is required as a cofactor.

Its subcellular location is the cytoplasm. The catalysed reaction is IMP + L-aspartate + GTP = N(6)-(1,2-dicarboxyethyl)-AMP + GDP + phosphate + 2 H(+). Its pathway is purine metabolism; AMP biosynthesis via de novo pathway; AMP from IMP: step 1/2. Functionally, plays an important role in the de novo pathway of purine nucleotide biosynthesis. Catalyzes the first committed step in the biosynthesis of AMP from IMP. This is Adenylosuccinate synthetase from Cyanothece sp. (strain PCC 7425 / ATCC 29141).